The following is a 192-amino-acid chain: Cysteine and glycine-rich protein 1 (192 aa).

In terms of domain architecture, LIM zinc-binding 1 spans 10–61 (CGVCQKAVYFAEEVQCEGSSFHKSCFLCMVCKKNLDSTTVAVHGDEIYCKSC). Positions 64–69 (KKYGPK) match the Nuclear localization signal motif. In terms of domain architecture, LIM zinc-binding 2 spans 118–169 (CPRCGQAVYAAEKVIGAGKSWHKSCFRCAKCGKSLESTTLADKDGEIYCKGC).

Probable monomer. Interacts with ZYX. Most prominent in tissues that are enriched in smooth muscle cells, such as gizzard, stomach, and intestine. Lower level in the heart, no expression in liver, skeletal muscle, or brain.

It is found in the nucleus. It localises to the cytoplasm. The protein localises to the cytoskeleton. Functionally, heat stable protein, that interacts with zyxin/ZYX. May be a component of a signal transduction pathway that mediates adhesion-stimulated changes in gene expression. The protein is Cysteine and glycine-rich protein 1 (CSRP1) of Gallus gallus (Chicken).